The sequence spans 258 residues: Tryptophan synthase alpha chain (258 aa).

Catalysis depends on proton acceptor residues Glu47 and Asp58.

The protein belongs to the TrpA family. As to quaternary structure, tetramer of two alpha and two beta chains.

It catalyses the reaction (1S,2R)-1-C-(indol-3-yl)glycerol 3-phosphate + L-serine = D-glyceraldehyde 3-phosphate + L-tryptophan + H2O. The protein operates within amino-acid biosynthesis; L-tryptophan biosynthesis; L-tryptophan from chorismate: step 5/5. Functionally, the alpha subunit is responsible for the aldol cleavage of indoleglycerol phosphate to indole and glyceraldehyde 3-phosphate. The polypeptide is Tryptophan synthase alpha chain (Bacillus thuringiensis (strain Al Hakam)).